Here is an 801-residue protein sequence, read N- to C-terminus: Transducin beta-like protein 3 (801 aa).

N-acetylalanine is present on alanine 2. WD repeat units follow at residues 64–105 (EDQE…RLWK), 107–146 (IHTA…GTHH), 149–190 (GSPG…CLAV), 193–232 (AHYS…TTRT), 245–284 (LPEQ…CVYT), 290–329 (GLRQ…LQKQ), 332–372 (GYSE…CQIL), 374–413 (GHTD…QVAC), 419–459 (GHTH…LAKS), 477–516 (CHDK…LLGV), 519–560 (GHRR…KTFE), 562–602 (HDAS…RTLD), and 604–642 (HEDK…EQAE). Serine 257 carries the phosphoserine modification. A Glycyl lysine isopeptide (Lys-Gly) (interchain with G-Cter in SUMO2) cross-link involves residue lysine 407.

As to quaternary structure, part of the small subunit (SSU) processome, composed of more than 70 proteins and the RNA chaperone small nucleolar RNA (snoRNA) U3.

Its subcellular location is the nucleus. The protein localises to the nucleolus. In terms of biological role, part of the small subunit (SSU) processome, first precursor of the small eukaryotic ribosomal subunit. During the assembly of the SSU processome in the nucleolus, many ribosome biogenesis factors, an RNA chaperone and ribosomal proteins associate with the nascent pre-rRNA and work in concert to generate RNA folding, modifications, rearrangements and cleavage as well as targeted degradation of pre-ribosomal RNA by the RNA exosome. The chain is Transducin beta-like protein 3 (Tbl3) from Mus musculus (Mouse).